The chain runs to 261 residues: Hydroxylase cctR (261 aa).

A helical membrane pass occupies residues 38-58 (VFVSLLILSNTISFGLLGWIG). Asn-95 carries an N-linked (GlcNAc...) asparagine glycan. 2 short sequence motifs (HXXHC) span residues 146 to 150 (HEIHC) and 176 to 180 (HIAHC).

The protein belongs to the ustYa family.

Its subcellular location is the membrane. It participates in mycotoxin biosynthesis. Functionally, hydroxylase; part of the gene cluster that mediates the biosynthesis of the mycotoxin cyclochlorotine, a hepatotoxic and carcinogenic cyclic chlorinated pentapeptide. Within the pathway, cctR performs the last step by hydroxylating cyclochlorotine to yield hydroxycyclochlorotine. The NRPS cctN initially catalyzes the condensation of L-serine (Ser), Pro, L-2-aminobutyrate (2Abu), Ser, and beta-Phe in this order to produce isocyclotine. After the dichlorination of Pro2 catalyzed by cctP2 to produce isocyclochlorotine, the cctO-mediated transacylation of isocyclochlorotine can furnish cyclochlorotine. The subsequent hydroxylation of cyclochlorotine by cctR yields hydroxycyclochlorotine as the final product. CctP1 probably acts as a phenylalanine aminomutase and provides the uncommon building block beta-Phe. Furthermore, 2Abu can be synthesized from threonine by one of the threonine dehydratases and transaminases localized outside of the cluster. The functions of the remaining proteins encoded by the cluster, cctM and cctT, have not been identified yet. This Talaromyces islandicus (Penicillium islandicum) protein is Hydroxylase cctR.